Consider the following 107-residue polypeptide: Conantokin-R (107 aa).

A signal peptide spans 1-24; that stretch reads MQLYTYLYLLVSLVTFYLILGTGT. Positions 25-80 are excised as a propeptide; the sequence is LGHGGALTERRSTDATALKPEPVLLQKSSARSTDDNGNDRLTQMKRILKKRGNKAR. Residues 26 to 64 form a disordered region; it reads GHGGALTERRSTDATALKPEPVLLQKSSARSTDDNGNDR. 4 positions are modified to 4-carboxyglutamate: E83, E84, E91, and E95. Residues E91 and E95 each contribute to the a divalent metal cation site. C101 and C105 are disulfide-bonded.

The protein belongs to the conotoxin B superfamily. The cofactor is Ca(2+). It depends on Mg(2+) as a cofactor. In terms of tissue distribution, expressed by the venom duct.

The protein localises to the secreted. Its function is as follows. Conantokins inhibit N-methyl-D-aspartate (NMDA) receptors. This toxin is potent in the following order of preference: NR2B approximately NR2A/GRIN2A &gt; NR2C/GRIN2C &gt;&gt; NR2D/GRIN2D. Induces sleep-like symptoms in young mice. Is a highly potent anticonvulsant compound. In Conus radiatus (Rayed cone), this protein is Conantokin-R.